The primary structure comprises 718 residues: Nucleolar protein 11 (718 aa).

Lysine 346 bears the N6-methyllysine mark.

Interacts with UTP4. Interacts with FBL/fibrillarin in a transcription-dependent manner. May associate with the proposed t-UTP subcomplex of the SSU processome containing at least UTP4, WDR43, HEATR1, UTP15, WDR75.

The protein localises to the nucleus. The protein resides in the nucleolus. In terms of biological role, ribosome biogenesis factor. May be required for both optimal rDNA transcription and small subunit (SSU) pre-rRNA processing at sites A', A0, 1 and 2b. The sequence is that of Nucleolar protein 11 (NOL11) from Bos taurus (Bovine).